A 465-amino-acid polypeptide reads, in one-letter code: MSRNTKNVLVVSFGFLLLFTAYGGLQSLQSSLNAEEGMGVISLSVIYAAIILSSMFLPPIMIKNLGCKWTIVVSMGCYVAYSFGNLAPGWASLMSTSAILGMGGSPLWSAKCTYLTISGNRQGQKHNKKGQDLINQYFGIFFFIFQSSGVWGNLMSSLIFGQDQNIVPKENLEFCGVSTCLDNFTVIGNSTRPSKHLVDTLLGCYIGVGLLAIIFVAVFLDNIDRDEAKEFRSTKGNKSFWDTFLATFKLLRDPRLLLLIPLTMYSGFEQSFLSGEYTKNYVTCALGIHNVGFVMICFAASNSLCSFAFGRLAQYTGRIALFCLAAAINLGSFLGLLYWKPHPDQLAIFFVFPALWGMADAVWQTQTNALYGILFAKNKEAAFANYRMWESLGFVIAFAYSTFICLSTKIYIALAVLALTMVTYLYVEYNEYKHPTPQVTEDFLKPIKPKLKDDKEDNIISQTQL.

Transmembrane regions (helical) follow at residues 8 to 28 (VLVV…LQSL), 40 to 60 (VISL…LPPI), 71 to 91 (IVVS…PGWA), 96 to 118 (TSAI…LTIS), and 140 to 160 (IFFF…SLIF). N-linked (GlcNAc...) asparagine glycosylation is found at asparagine 183 and asparagine 189. Residues 200 to 220 (TLLGCYIGVGLLAIIFVAVFL) form a helical membrane-spanning segment. A glycan (N-linked (GlcNAc...) asparagine) is linked at asparagine 237. The next 5 helical transmembrane spans lie at 256-276 (LLLL…LSGE), 281-301 (YVTC…FAAS), 319-339 (IALF…LLYW), 343-363 (PDQL…DAVW), and 410-427 (IYIA…YLYV).

It belongs to the unc-93 family.

It is found in the membrane. This Danio rerio (Zebrafish) protein is Protein unc-93 homolog A (unc93a).